A 63-amino-acid chain; its full sequence is Cecropin-A1 (63 aa).

The first 19 residues, 1–19 (MNFYNIFVFVALILAITIG), serve as a signal peptide directing secretion. The residue at position 62 (arginine 62) is an Arginine amide.

Belongs to the cecropin family.

The protein localises to the secreted. In terms of biological role, cecropins have lytic and antibacterial activity against several Gram-positive and Gram-negative bacteria. The polypeptide is Cecropin-A1 (CecA1) (Drosophila simulans (Fruit fly)).